We begin with the raw amino-acid sequence, 659 residues long: Cyclic-di-AMP phosphodiesterase GdpP (659 aa).

Residues 1–8 are Cytoplasmic-facing; the sequence is MPSFYEKP. 2 helical membrane-spanning segments follow: residues 9–29 and 30–50; these read LFRYPIYALIALSIITILISF and YFNWILGTVEVLLLAVILFFI. Residues 51-659 lie on the Cytoplasmic side of the membrane; sequence KRADSLIRQE…DEYFEGGVQR (609 aa). Residues 84 to 149 form a PAS-like domain, required for heme-binding region; it reads PIGIMLFNDQ…NDRKFRVVIK (66 aa). The region spanning 173–301 is the GGDEF domain; it reads ERTVLAYIFL…GGDQVAIKLP (129 aa). Positions 339–496 are DHH domain; the sequence is NVIIMGHKFP…IEATALLAGI (158 aa). The Mn(2+) site is built by His345, Asp349, Asp351, Asp420, His444, and Asp499. The DHHA1 domain stretch occupies residues 591–646; sequence FAVARRDEQTVCISARSLGEVNVQIIMEALEGGGHLTNAATQLSGISVSEALERLK.

It belongs to the GdpP/PdeA phosphodiesterase family. It depends on heme b as a cofactor. Mg(2+) serves as cofactor. The cofactor is Mn(2+).

The protein localises to the cell membrane. It carries out the reaction 3',3'-c-di-AMP + H2O = 5'-O-phosphonoadenylyl-(3'-&gt;5')-adenosine + H(+). Phosphodiesterase (PDE) inhibited by Zn(2+), Ca(2+) inhibits in the presence of Mg(2+) but not Mn(2+); c-di-AMP PDE activity is competitively inhibited by ppGpp. Heme binding (by Fe(2+) or Fe(3+) heme) inhibits PDE, activity is partially restored by KCN or NO only for Fe(2+) heme. Binding of NO to Fe(2+) heme switches from hexa- to pentacoordination. Heme binding inhibits the ATPase activity. Its function is as follows. Has phosphodiesterase (PDE) activity against cyclic-di-AMP (c-di-AMP) and to a much lesser extent against cyclic-di-GMP (c-di-GMP) in the DHH/DHHA1 domains. Also has ATPase activity, probably via the GGDEF domain. Overexpression leads to increased sensitivity to methyl methanesulfonate (MMS) and H(2)O(2). Overexpression leads to extreme sensitivity to the beta-lactam antibiotic cefuroxime (CEF), probably dependent on PDE activity. May monitor cellular heme or NO levels. In B.subtilis c-di-AMP is a second messenger that mediates growth, DNA repair and cell wall homeostasis; it is toxic when present in excess. This is Cyclic-di-AMP phosphodiesterase GdpP from Bacillus subtilis (strain 168).